A 595-amino-acid polypeptide reads, in one-letter code: Glutamyl-tRNA(Gln) amidotransferase subunit B, mitochondrial (595 aa).

The N-terminal 72 residues, 1–72, are a transit peptide targeting the mitochondrion; that stretch reads MPRLWYSRYL…RAKSQSRNGR (72 aa).

This sequence belongs to the GatB/GatE family. GatB subfamily. As to quaternary structure, subunit of the heterotrimeric GatCAB amidotransferase (AdT) complex, composed of A, B and C subunits.

It is found in the mitochondrion. The enzyme catalyses L-glutamyl-tRNA(Gln) + L-glutamine + ATP + H2O = L-glutaminyl-tRNA(Gln) + L-glutamate + ADP + phosphate + H(+). Functionally, allows the formation of correctly charged Gln-tRNA(Gln) through the transamidation of misacylated Glu-tRNA(Gln) in the mitochondria. The reaction takes place in the presence of glutamine and ATP through an activated gamma-phospho-Glu-tRNA(Gln). The protein is Glutamyl-tRNA(Gln) amidotransferase subunit B, mitochondrial of Talaromyces marneffei (strain ATCC 18224 / CBS 334.59 / QM 7333) (Penicillium marneffei).